A 443-amino-acid polypeptide reads, in one-letter code: Glutamine synthetase (443 aa).

The 86-residue stretch at 16 to 101 (NGVKFIRLQF…LICDVYKPDG (86 aa)) folds into the GS beta-grasp domain. Residues 108–443 (PRHVLKRANA…WELENYLNKY (336 aa)) enclose the GS catalytic domain. Positions 131 and 133 each coordinate Mg(2+). Glu183 lines the ATP pocket. Mg(2+) is bound by residues Glu188 and Glu195. L-glutamate contacts are provided by residues 239-240 (NG) and Gly240. Residue His244 coordinates Mg(2+). Ser248 is an ATP binding site. L-glutamate-binding residues include Arg297, Glu303, and Arg315. Residues Arg315 and Arg320 each coordinate ATP. Residue Glu332 participates in Mg(2+) binding. Residue Arg334 participates in L-glutamate binding.

This sequence belongs to the glutamine synthetase family. In terms of assembly, oligomer of 12 subunits arranged in the form of two hexagons. In its feedback-inhibited form, interacts with TnrA in order to block its DNA-binding activity. Mg(2+) is required as a cofactor.

It is found in the cytoplasm. It catalyses the reaction L-glutamate + NH4(+) + ATP = L-glutamine + ADP + phosphate + H(+). Its activity is regulated as follows. Inhibited by glutamine. Glutamine synthetase (GS) is an unusual multitasking protein that functions as an enzyme, a transcription coregulator, and a chaperone in ammonium assimilation and in the regulation of genes involved in nitrogen metabolism. It catalyzes the ATP-dependent biosynthesis of glutamine from glutamate and ammonia. Feedback-inhibited GlnA also interacts with and regulates the activity of the transcriptional regulator TnrA. During nitrogen limitation, TnrA is in its DNA-binding active state and turns on the transcription of genes required for nitrogen assimilation. Under conditions of nitrogen excess, feedback-inhibited GlnA forms a stable complex with TnrA, which inhibits its DNA-binding activity. In contrast, feedback-inhibited GlnA acts as a chaperone to stabilize the DNA-binding activity of GlnR, which represses the transcription of nitrogen assimilation genes. This Clostridium saccharobutylicum protein is Glutamine synthetase.